Here is a 435-residue protein sequence, read N- to C-terminus: Aspartate aminotransferase (435 aa).

Residues Y69 and 100-101 (SL) each bind pyridoxal 5'-phosphate. Position 139 to 141 (139 to 141 (YDR)) interacts with substrate. Pyridoxal 5'-phosphate is bound by residues N189, Y221, and 254 to 256 (STS). Residue R392 participates in substrate binding.

It belongs to the class-I pyridoxal-phosphate-dependent aminotransferase family. The cofactor is pyridoxal 5'-phosphate.

The enzyme catalyses L-aspartate + 2-oxoglutarate = oxaloacetate + L-glutamate. Its function is as follows. Main aspartate aminotransferase that couples nitrogen assimilation to aspartate synthesis. Has a weak, but significant, side activity toward kynurenine (Kyn). Oxaloacetate and 2-oxoglutarate, but not pyruvate, serve as amino acceptors, while Asp, Glu and Kyn serve as the best amino donors. Essential for axenic growth and survival of M.tuberculosis in macrophages and in mice. This chain is Aspartate aminotransferase, found in Mycobacterium tuberculosis (strain ATCC 25618 / H37Rv).